Consider the following 147-residue polypeptide: Large ribosomal subunit protein uL15 (147 aa).

Positions 1–42 are disordered; the sequence is MTIKLHHLRPAPGSKSNKIRVGRGEGGKRGKTAGRGTKGTKA.

The protein belongs to the universal ribosomal protein uL15 family. As to quaternary structure, part of the 50S ribosomal subunit.

Its function is as follows. Binds to the 23S rRNA. This is Large ribosomal subunit protein uL15 from Rhodococcus erythropolis (strain PR4 / NBRC 100887).